We begin with the raw amino-acid sequence, 62 residues long: MIIAFQLAVFALIATSSILLISVPVVFASPDGWSNNKNVVFSGTSLWIGLVFLVAILNSLIS.

A run of 2 helical transmembrane segments spans residues Ala-8–Ala-28 and Phe-41–Ile-61.

Belongs to the PsbZ family. In terms of assembly, PSII is composed of 1 copy each of membrane proteins PsbA, PsbB, PsbC, PsbD, PsbE, PsbF, PsbH, PsbI, PsbJ, PsbK, PsbL, PsbM, PsbT, PsbY, PsbZ, Psb30/Ycf12, at least 3 peripheral proteins of the oxygen-evolving complex and a large number of cofactors. It forms dimeric complexes.

The protein localises to the plastid. The protein resides in the chloroplast thylakoid membrane. Functionally, may control the interaction of photosystem II (PSII) cores with the light-harvesting antenna, regulates electron flow through the 2 photosystem reaction centers. PSII is a light-driven water plastoquinone oxidoreductase, using light energy to abstract electrons from H(2)O, generating a proton gradient subsequently used for ATP formation. The protein is Photosystem II reaction center protein Z of Calycanthus floridus var. glaucus (Eastern sweetshrub).